Here is a 413-residue protein sequence, read N- to C-terminus: D-nopaline dehydrogenase (413 aa).

The protein belongs to the lysopine/nopaline/octopine/opine/vitopine dehydrogenases family. Homotetramer.

The catalysed reaction is D-nopaline + NADP(+) + H2O = L-arginine + 2-oxoglutarate + NADPH + H(+). This chain is D-nopaline dehydrogenase (nos), found in Agrobacterium tumefaciens (strain T37).